The primary structure comprises 268 residues: Glucosamine-6-phosphate deaminase (268 aa).

Asp-72 (proton acceptor; for enolization step) is an active-site residue. Asp-141 functions as the For ring-opening step in the catalytic mechanism. His-143 functions as the Proton acceptor; for ring-opening step in the catalytic mechanism. Glu-148 functions as the For ring-opening step in the catalytic mechanism.

This sequence belongs to the glucosamine/galactosamine-6-phosphate isomerase family. NagB subfamily. Homohexamer.

It carries out the reaction alpha-D-glucosamine 6-phosphate + H2O = beta-D-fructose 6-phosphate + NH4(+). Its pathway is amino-sugar metabolism; N-acetylneuraminate degradation; D-fructose 6-phosphate from N-acetylneuraminate: step 5/5. With respect to regulation, allosterically activated by N-acetylglucosamine 6-phosphate (GlcNAc6P). Functionally, catalyzes the reversible isomerization-deamination of glucosamine 6-phosphate (GlcN6P) to form fructose 6-phosphate (Fru6P) and ammonium ion. The protein is Glucosamine-6-phosphate deaminase of Histophilus somni (strain 129Pt) (Haemophilus somnus).